A 467-amino-acid chain; its full sequence is Zinc finger and BTB domain-containing protein 43 (467 aa).

Met-1 is subject to N-acetylmethionine. Residues 33–97 (CDVSIVVQGH…SYTGRLVMPA (65 aa)) enclose the BTB domain. 2 disordered regions span residues 134–153 (LNHG…GLVE) and 162–225 (HTDF…SAEF). Basic and acidic residues-rich tracts occupy residues 164–174 (DFPKAQELRDG) and 182–194 (KDEL…EHEY). Residues Lys-182, Lys-241, Lys-247, Lys-297, and Lys-358 each participate in a glycyl lysine isopeptide (Lys-Gly) (interchain with G-Cter in SUMO2) cross-link. Residues 373-394 (YPCQCGKSFTHKSQRDRHMSMH) form a C2H2-type 1; atypical zinc finger. Residues 400-422 (YGCGVCGKKFKMKHHLVGHMKIH) form a C2H2-type 2 zinc finger. Thr-423 is subject to Phosphothreonine. Residues 428 to 450 (YECNICAKRFMWRDSFHRHVTSC) form a C2H2-type 3; atypical zinc finger. Lys-458 is covalently cross-linked (Glycyl lysine isopeptide (Lys-Gly) (interchain with G-Cter in SUMO2)).

The protein belongs to the krueppel C2H2-type zinc-finger protein family. As to quaternary structure, interacts with BDP1.

Its subcellular location is the nucleus. May be involved in transcriptional regulation. The polypeptide is Zinc finger and BTB domain-containing protein 43 (ZBTB43) (Homo sapiens (Human)).